We begin with the raw amino-acid sequence, 677 residues long: Methionine--tRNA ligase (677 aa).

Residues proline 15–histidine 25 carry the 'HIGH' region motif. Positions 146, 149, 159, and 162 each coordinate Zn(2+). The short motif at lysine 333–serine 337 is the 'KMSKS' region element. Lysine 336 is an ATP binding site. One can recognise a tRNA-binding domain in the interval aspartate 575–lysine 677.

This sequence belongs to the class-I aminoacyl-tRNA synthetase family. MetG type 1 subfamily. Homodimer. Zn(2+) serves as cofactor.

It localises to the cytoplasm. It carries out the reaction tRNA(Met) + L-methionine + ATP = L-methionyl-tRNA(Met) + AMP + diphosphate. Is required not only for elongation of protein synthesis but also for the initiation of all mRNA translation through initiator tRNA(fMet) aminoacylation. This is Methionine--tRNA ligase from Shigella boydii serotype 18 (strain CDC 3083-94 / BS512).